We begin with the raw amino-acid sequence, 300 residues long: Acetylglutamate kinase (300 aa).

Residues 73–74 (GG), Arg95, and Asn197 contribute to the substrate site.

The protein belongs to the acetylglutamate kinase family. ArgB subfamily.

The protein localises to the cytoplasm. It carries out the reaction N-acetyl-L-glutamate + ATP = N-acetyl-L-glutamyl 5-phosphate + ADP. It functions in the pathway amino-acid biosynthesis; L-arginine biosynthesis; N(2)-acetyl-L-ornithine from L-glutamate: step 2/4. In terms of biological role, catalyzes the ATP-dependent phosphorylation of N-acetyl-L-glutamate. The protein is Acetylglutamate kinase of Polynucleobacter asymbioticus (strain DSM 18221 / CIP 109841 / QLW-P1DMWA-1) (Polynucleobacter necessarius subsp. asymbioticus).